Reading from the N-terminus, the 199-residue chain is dITP/XTP pyrophosphatase (199 aa).

Thr9 to Lys14 serves as a coordination point for substrate. The Mg(2+) site is built by Glu41 and Asp70. Residue Asp70 is the Proton acceptor of the active site. Substrate is bound by residues Ser71, Phe157 to Asp160, Lys180, and His185 to Arg186.

The protein belongs to the HAM1 NTPase family. Homodimer. Requires Mg(2+) as cofactor.

It carries out the reaction XTP + H2O = XMP + diphosphate + H(+). The catalysed reaction is dITP + H2O = dIMP + diphosphate + H(+). It catalyses the reaction ITP + H2O = IMP + diphosphate + H(+). In terms of biological role, pyrophosphatase that catalyzes the hydrolysis of nucleoside triphosphates to their monophosphate derivatives, with a high preference for the non-canonical purine nucleotides XTP (xanthosine triphosphate), dITP (deoxyinosine triphosphate) and ITP. Seems to function as a house-cleaning enzyme that removes non-canonical purine nucleotides from the nucleotide pool, thus preventing their incorporation into DNA/RNA and avoiding chromosomal lesions. This is dITP/XTP pyrophosphatase from Mannheimia succiniciproducens (strain KCTC 0769BP / MBEL55E).